Here is a 363-residue protein sequence, read N- to C-terminus: Fructose-bisphosphate aldolase 2 (363 aa).

Residue serine 61 coordinates D-glyceraldehyde 3-phosphate. The active-site Proton donor is the aspartate 109. Residues histidine 110, aspartate 144, glutamate 174, and histidine 226 each coordinate Zn(2+). Residue glycine 227 participates in dihydroxyacetone phosphate binding. A Zn(2+)-binding site is contributed by histidine 264. Residue 265-267 coordinates dihydroxyacetone phosphate; that stretch reads GGS.

The protein belongs to the class II fructose-bisphosphate aldolase family. As to quaternary structure, homodimer. It depends on Zn(2+) as a cofactor.

The catalysed reaction is beta-D-fructose 1,6-bisphosphate = D-glyceraldehyde 3-phosphate + dihydroxyacetone phosphate. It participates in carbohydrate degradation; glycolysis; D-glyceraldehyde 3-phosphate and glycerone phosphate from D-glucose: step 4/4. Catalyzes the aldol condensation of dihydroxyacetone phosphate (DHAP or glycerone-phosphate) with glyceraldehyde 3-phosphate (G3P) to form fructose 1,6-bisphosphate (FBP) in gluconeogenesis and the reverse reaction in glycolysis. The sequence is that of Fructose-bisphosphate aldolase 2 (FBA2) from Paracoccidioides lutzii (strain ATCC MYA-826 / Pb01) (Paracoccidioides brasiliensis).